Consider the following 230-residue polypeptide: Sugar fermentation stimulation protein homolog (230 aa).

Belongs to the SfsA family.

This is Sugar fermentation stimulation protein homolog from Clostridium kluyveri (strain NBRC 12016).